The sequence spans 201 residues: Urease accessory protein UreG (201 aa).

11-18 (GPVGSGKT) lines the GTP pocket.

It belongs to the SIMIBI class G3E GTPase family. UreG subfamily. In terms of assembly, homodimer. UreD, UreF and UreG form a complex that acts as a GTP-hydrolysis-dependent molecular chaperone, activating the urease apoprotein by helping to assemble the nickel containing metallocenter of UreC. The UreE protein probably delivers the nickel.

It localises to the cytoplasm. Facilitates the functional incorporation of the urease nickel metallocenter. This process requires GTP hydrolysis, probably effectuated by UreG. The polypeptide is Urease accessory protein UreG (Synechococcus sp. (strain CC9902)).